We begin with the raw amino-acid sequence, 104 residues long: Protein translation factor SUI1 homolog (104 aa).

This sequence belongs to the SUI1 family.

This chain is Protein translation factor SUI1 homolog, found in Ignicoccus hospitalis (strain KIN4/I / DSM 18386 / JCM 14125).